Reading from the N-terminus, the 438-residue chain is Trigger factor (438 aa).

The region spanning 160–245 (DDKVTIDFVG…VKKIQQAELP (86 aa)) is the PPIase FKBP-type domain.

The protein belongs to the FKBP-type PPIase family. Tig subfamily.

The protein localises to the cytoplasm. The catalysed reaction is [protein]-peptidylproline (omega=180) = [protein]-peptidylproline (omega=0). Involved in protein export. Acts as a chaperone by maintaining the newly synthesized protein in an open conformation. Functions as a peptidyl-prolyl cis-trans isomerase. The sequence is that of Trigger factor from Francisella tularensis subsp. holarctica (strain OSU18).